Consider the following 155-residue polypeptide: Ribosomal RNA large subunit methyltransferase H (155 aa).

S-adenosyl-L-methionine-binding positions include leucine 72, glycine 103, and phenylalanine 122–tryptophan 127.

Belongs to the RNA methyltransferase RlmH family. Homodimer.

It localises to the cytoplasm. It catalyses the reaction pseudouridine(1915) in 23S rRNA + S-adenosyl-L-methionine = N(3)-methylpseudouridine(1915) in 23S rRNA + S-adenosyl-L-homocysteine + H(+). Its function is as follows. Specifically methylates the pseudouridine at position 1915 (m3Psi1915) in 23S rRNA. The polypeptide is Ribosomal RNA large subunit methyltransferase H (Cereibacter sphaeroides (strain ATCC 17023 / DSM 158 / JCM 6121 / CCUG 31486 / LMG 2827 / NBRC 12203 / NCIMB 8253 / ATH 2.4.1.) (Rhodobacter sphaeroides)).